Here is a 459-residue protein sequence, read N- to C-terminus: Proton-coupled folate transporter (459 aa).

Met-1 bears the N-acetylmethionine mark. At 1–25 (MEGRANSPGEPRAWPTRSVLCRGCV) the chain is on the cytoplasmic side. The helical transmembrane segment at 26–44 (EPLVFLANFALVLQGPVTT) threads the bilayer. The Extracellular portion of the chain corresponds to 45 to 82 (QYLWHRFSADLGYNGTRHRDSCSNHSVDPIAQEVETLT). 2 N-linked (GlcNAc...) asparagine glycosylation sites follow: Asn-58 and Asn-68. An intrachain disulfide couples Cys-66 to Cys-298. Residues 83-108 (SHWTLYMNVGGFLVGLFSSTLLGAWS) form a helical membrane-spanning segment. Residues 109-112 (DCVG) are Cytoplasmic-facing. A helical transmembrane segment spans residues 113-135 (RRPLLVLASLGLLLQTVLSIFVV). The Extracellular segment spans residues 136 to 140 (QLHLH). The helical transmembrane segment at 141–154 (IGYLVLGRILCALL) threads the bilayer. The Cytoplasmic segment spans residues 155–177 (GDFSGLLAASFASVADVSSSRTR). Residues Asp-156 and Glu-185 each contribute to the H(+) site. The chain crosses the membrane as a helical span at residues 178 to 203 (TIRMALLEACIGVAGMLASFIGGFLL). The Extracellular segment spans residues 204–208 (QEQVY). A helical transmembrane segment spans residues 209 to 227 (VNPFWLALAVLTVMTLYAA). Residues 228-266 (FCFGETVKERTPTRLFTLRHHRSVIQLYVTQAPEKSRKH) are Cytoplasmic-facing. The chain crosses the membrane as a helical span at residues 267–289 (LALYSLAIFVMITVHLGAQDILT). His-281 serves as a coordination point for H(+). At 290-302 (LYELSAPLCWDSR) the chain is on the extracellular side. A helical membrane pass occupies residues 303–325 (LISYGSAAQQLPYLTSLLGLRLL). The Cytoplasmic segment spans residues 326–331 (QYCLAD). Residues 332–351 (TWVAEIGLVFNILGMMVFAF) traverse the membrane as a helical segment. The Extracellular segment spans residues 352–355 (ATIT). Residues 356-376 (PLMFTGYGLLFLSLVVTPIIR) form a helical membrane-spanning segment. Residues 377–388 (AKLSRLVRQSEQ) are Cytoplasmic-facing. The helical transmembrane segment at 389–414 (GALFSALACVNGLAMLMASGIFNSLY) threads the bilayer. The Extracellular portion of the chain corresponds to 415 to 422 (PATLNLMK). Residues 423–441 (GFPFLLAAGLLFIPAILMG) traverse the membrane as a helical segment. Residues 442–459 (ILERDNHCPEFQEFSQSP) lie on the Cytoplasmic side of the membrane. Ser-458 carries the post-translational modification Phosphoserine.

Belongs to the major facilitator superfamily. SLC46A family. In terms of assembly, monomer. Expressed in retina and retinal pigment epithelium.

The protein localises to the cell membrane. It is found in the apical cell membrane. It localises to the basolateral cell membrane. The protein resides in the endosome membrane. Its subcellular location is the cytoplasm. The enzyme catalyses folate(in) + H(+)(in) = folate(out) + H(+)(out). It carries out the reaction (6S)-5-methyl-5,6,7,8-tetrahydrofolate(in) + H(+)(in) = (6S)-5-methyl-5,6,7,8-tetrahydrofolate(out) + H(+)(out). The catalysed reaction is methotrexate(in) + H(+)(in) = methotrexate(out) + H(+)(out). It catalyses the reaction pemetrexed(in) + H(+)(in) = pemetrexed(out) + H(+)(out). Proton-coupled folate symporter that mediates folate absorption using an H(+) gradient as a driving force. Involved in the intestinal absorption of folates at the brush-border membrane of the proximal jejunum, and the transport from blood to cerebrospinal fluid across the choroid plexus. Functions at acidic pH via alternate outward- and inward-open conformation states. Protonation of residues in the outward open state primes the protein for transport. Binding of folate promotes breaking of salt bridge network and subsequent closure of the extracellular gate, leading to the inward-open state and release of protons and folate. Also able to transport antifolate drugs, such as methotrexate and pemetrexed. Involved in FOLR1-mediated endocytosis by serving as a route of export of folates from acidified endosomes. Also acts as a lower-affinity, pH-independent heme carrier protein and constitutes the main importer of heme in the intestine. Imports heme in the retina and retinal pigment epithelium, in neurons of the hippocampus, in hepatocytes and in the renal epithelial cells. Hence, participates in the trafficking of heme and increases intracellular iron content. The sequence is that of Proton-coupled folate transporter from Bos taurus (Bovine).